The following is a 390-amino-acid chain: MKRVAILGSTGSIGVQALDVVGRFPDRFEVVGLAAGRNAPRLLEQIRRFRPRVVSVCDEAAARAVRAEAPPGTEVLSGDAGAVAVASHPDAAFVLAAISGGAGLRSTAAAIEAGKPVGLANKESMVLAGELLMARAAAKGVAILPVDSEHSAIHQSLVGHNRGEVRRLILTASGGPLRCTPEAELATVTPERALKHPNWSMGDKITIDSATLMNKGLEVIEARWLFGVEQQRIDIVVHPESVVHSMVEYVDGSIVAQLGISDMRGPISYAMGHPERMPLDLPPLDLGRLGKLTFEPPDPARFPAYTLAYRALELGGTAPAVLSGADEAAVAAFLARRCSFTEIAEVCADVLEAHVVEPVRSVEQALAASEHGRREAEKRVGARAHAPASR.

NADPH is bound by residues Thr-10, Gly-11, Ser-12, Ile-13, Gly-36, Arg-37, Asn-38, and Asn-121. Lys-122 provides a ligand contact to 1-deoxy-D-xylulose 5-phosphate. Glu-123 contributes to the NADPH binding site. A Mn(2+)-binding site is contributed by Asp-147. 1-deoxy-D-xylulose 5-phosphate contacts are provided by Ser-148, Glu-149, Ser-173, and His-196. Glu-149 provides a ligand contact to Mn(2+). NADPH is bound at residue Gly-202. Positions 209, 214, 215, and 218 each coordinate 1-deoxy-D-xylulose 5-phosphate. Glu-218 is a binding site for Mn(2+). Positions 367–390 are disordered; it reads AASEHGRREAEKRVGARAHAPASR. The segment covering 370-380 has biased composition (basic and acidic residues); sequence EHGRREAEKRV.

It belongs to the DXR family. Mg(2+) serves as cofactor. Mn(2+) is required as a cofactor.

The enzyme catalyses 2-C-methyl-D-erythritol 4-phosphate + NADP(+) = 1-deoxy-D-xylulose 5-phosphate + NADPH + H(+). Its pathway is isoprenoid biosynthesis; isopentenyl diphosphate biosynthesis via DXP pathway; isopentenyl diphosphate from 1-deoxy-D-xylulose 5-phosphate: step 1/6. Functionally, catalyzes the NADPH-dependent rearrangement and reduction of 1-deoxy-D-xylulose-5-phosphate (DXP) to 2-C-methyl-D-erythritol 4-phosphate (MEP). The sequence is that of 1-deoxy-D-xylulose 5-phosphate reductoisomerase from Anaeromyxobacter dehalogenans (strain 2CP-1 / ATCC BAA-258).